A 465-amino-acid chain; its full sequence is GTPase Der (465 aa).

2 EngA-type G domains span residues 3–167 and 179–352; these read PLVA…PERS and IHIA…VSAL. Residues 9–16, 57–61, 119–122, 185–192, 232–236, and 297–300 contribute to the GTP site; these read GRPNVGKS, DTGGM, NKID, DTAGL, and NKWD. Positions 353-437 constitute a KH-like domain; that stretch reads RQFSTSEVNK…PVRFLFREGD (85 aa).

This sequence belongs to the TRAFAC class TrmE-Era-EngA-EngB-Septin-like GTPase superfamily. EngA (Der) GTPase family. As to quaternary structure, associates with the 50S ribosomal subunit.

Its function is as follows. GTPase that plays an essential role in the late steps of ribosome biogenesis. This is GTPase Der from Xylella fastidiosa (strain M23).